We begin with the raw amino-acid sequence, 258 residues long: Imidazole glycerol phosphate synthase subunit HisF (258 aa).

Catalysis depends on residues aspartate 11 and aspartate 130.

Belongs to the HisA/HisF family. In terms of assembly, heterodimer of HisH and HisF.

It is found in the cytoplasm. It carries out the reaction 5-[(5-phospho-1-deoxy-D-ribulos-1-ylimino)methylamino]-1-(5-phospho-beta-D-ribosyl)imidazole-4-carboxamide + L-glutamine = D-erythro-1-(imidazol-4-yl)glycerol 3-phosphate + 5-amino-1-(5-phospho-beta-D-ribosyl)imidazole-4-carboxamide + L-glutamate + H(+). It participates in amino-acid biosynthesis; L-histidine biosynthesis; L-histidine from 5-phospho-alpha-D-ribose 1-diphosphate: step 5/9. In terms of biological role, IGPS catalyzes the conversion of PRFAR and glutamine to IGP, AICAR and glutamate. The HisF subunit catalyzes the cyclization activity that produces IGP and AICAR from PRFAR using the ammonia provided by the HisH subunit. This chain is Imidazole glycerol phosphate synthase subunit HisF, found in Shigella dysenteriae serotype 1 (strain Sd197).